A 499-amino-acid polypeptide reads, in one-letter code: 2,3-bisphosphoglycerate-independent phosphoglycerate mutase (499 aa).

The Mn(2+) site is built by Asp-10 and Ser-60. The active-site Phosphoserine intermediate is Ser-60. Substrate-binding positions include His-121, 151 to 152 (RD), Arg-182, Arg-188, 253 to 256 (RPDR), and Lys-326. Asp-391, His-395, Asp-434, His-435, and His-452 together coordinate Mn(2+).

Belongs to the BPG-independent phosphoglycerate mutase family. Monomer. The cofactor is Mn(2+).

The enzyme catalyses (2R)-2-phosphoglycerate = (2R)-3-phosphoglycerate. The protein operates within carbohydrate degradation; glycolysis; pyruvate from D-glyceraldehyde 3-phosphate: step 3/5. Functionally, catalyzes the interconversion of 2-phosphoglycerate and 3-phosphoglycerate. This Metamycoplasma hominis (strain ATCC 23114 / DSM 25592 / NBRC 14850 / NCTC 10111 / PG21) (Mycoplasma hominis) protein is 2,3-bisphosphoglycerate-independent phosphoglycerate mutase.